The following is a 343-amino-acid chain: N-acetyl-gamma-glutamyl-phosphate reductase (343 aa).

Residue cysteine 146 is part of the active site.

It belongs to the NAGSA dehydrogenase family. Type 1 subfamily.

It is found in the cytoplasm. The catalysed reaction is N-acetyl-L-glutamate 5-semialdehyde + phosphate + NADP(+) = N-acetyl-L-glutamyl 5-phosphate + NADPH + H(+). The protein operates within amino-acid biosynthesis; L-arginine biosynthesis; N(2)-acetyl-L-ornithine from L-glutamate: step 3/4. In terms of biological role, catalyzes the NADPH-dependent reduction of N-acetyl-5-glutamyl phosphate to yield N-acetyl-L-glutamate 5-semialdehyde. This Acidothermus cellulolyticus (strain ATCC 43068 / DSM 8971 / 11B) protein is N-acetyl-gamma-glutamyl-phosphate reductase.